The sequence spans 496 residues: Probable cytosol aminopeptidase (496 aa).

Lys266 and Asp271 together coordinate Mn(2+). Lys278 is a catalytic residue. Mn(2+)-binding residues include Asp289, Asp348, and Glu350. Residue Arg352 is part of the active site.

Belongs to the peptidase M17 family. The cofactor is Mn(2+).

It is found in the cytoplasm. The catalysed reaction is Release of an N-terminal amino acid, Xaa-|-Yaa-, in which Xaa is preferably Leu, but may be other amino acids including Pro although not Arg or Lys, and Yaa may be Pro. Amino acid amides and methyl esters are also readily hydrolyzed, but rates on arylamides are exceedingly low.. It catalyses the reaction Release of an N-terminal amino acid, preferentially leucine, but not glutamic or aspartic acids.. Presumably involved in the processing and regular turnover of intracellular proteins. Catalyzes the removal of unsubstituted N-terminal amino acids from various peptides. The protein is Probable cytosol aminopeptidase of Pseudomonas syringae pv. syringae (strain B728a).